Consider the following 438-residue polypeptide: Enolase (438 aa).

A (2R)-2-phosphoglycerate-binding site is contributed by Q163. Catalysis depends on E205, which acts as the Proton donor. The Mg(2+) site is built by D243, E292, and D319. 4 residues coordinate (2R)-2-phosphoglycerate: K344, R373, S374, and K395. The Proton acceptor role is filled by K344.

The protein belongs to the enolase family. It depends on Mg(2+) as a cofactor.

The protein localises to the cytoplasm. It localises to the secreted. It is found in the cell surface. It carries out the reaction (2R)-2-phosphoglycerate = phosphoenolpyruvate + H2O. The protein operates within carbohydrate degradation; glycolysis; pyruvate from D-glyceraldehyde 3-phosphate: step 4/5. Functionally, catalyzes the reversible conversion of 2-phosphoglycerate (2-PG) into phosphoenolpyruvate (PEP). It is essential for the degradation of carbohydrates via glycolysis. The polypeptide is Enolase (Streptococcus agalactiae).